Reading from the N-terminus, the 392-residue chain is Heavy metal-associated isoprenylated plant protein 6 (392 aa).

Basic and acidic residues predominate over residues 1-19; the sequence is MGEKKEETATKPQGEKKPT. Residues 1-22 form a disordered region; that stretch reads MGEKKEETATKPQGEKKPTDGG. One can recognise an HMA 1 domain in the interval 23–86; sequence ITTVVMKLDM…KVADKIKRPV (64 aa). Residues Cys34 and Cys37 each coordinate Cd(2+). Residues 89–157 form a disordered region; it reads VSTVAPPKKE…PPPPKESTVV (69 aa). Basic and acidic residues predominate over residues 106–145; that stretch reads AEKKPSPAAEEKPAEKKPAAVEKPGEKKEEKKKEEGEKKA. The HMA 2 domain occupies 153–216; sequence ESTVVLKTKL…YLNEKLKRTV (64 aa). Residues Cys164 and Cys167 each contribute to the Cd(2+) site. Basic and acidic residues predominate over residues 258-270; it reads KKVDGGGEKKKEV. 2 disordered regions span residues 258–285 and 350–392; these read KKVD…GGDG and GQGY…CSVM. Over residues 272-285 the composition is skewed to gly residues; that stretch reads VGGGGGGGGGGGDG. Cys389 is subject to Cysteine methyl ester. A lipid anchor (S-farnesyl cysteine) is attached at Cys389. Positions 390–392 are cleaved as a propeptide — removed in mature form; the sequence is SVM.

It belongs to the HIPP family. As to expression, expressed in petioles, hypocotyls, peduncles, vascular bundles and root meristems.

Its subcellular location is the cell membrane. Functionally, heavy-metal-binding protein. Involved in the maintenance of heavy metal homeostasis and/or in detoxification. The protein is Heavy metal-associated isoprenylated plant protein 6 of Arabidopsis thaliana (Mouse-ear cress).